Reading from the N-terminus, the 84-residue chain is RQC P-site tRNA stabilizing factor (84 aa).

Residues 1 to 64 enclose the S4 RNA-binding domain; it reads MRIDKFLQSV…IEEYTILQIP (64 aa).

The protein belongs to the RqcP family. Associates with stalled 50S ribosomal subunits. Binds to RqcH, 23S rRNA and the P-site tRNA. Does not require RqcH for association with 50S subunits.

In terms of biological role, key component of the ribosome quality control system (RQC), a ribosome-associated complex that mediates the extraction of incompletely synthesized nascent chains from stalled ribosomes and their subsequent degradation. RqcH recruits Ala-charged tRNA, and with RqcP directs the elongation of stalled nascent chains on 50S ribosomal subunits, leading to non-templated C-terminal alanine extensions (Ala tail). The Ala tail promotes nascent chain degradation. RqcP is associated with the translocation-like movement of the peptidyl-tRNA from the A-site into the P-site. In Helicobacter pylori (strain ATCC 700392 / 26695) (Campylobacter pylori), this protein is RQC P-site tRNA stabilizing factor.